Consider the following 279-residue polypeptide: Thymidylate synthase 1 (279 aa).

Residue 141-142 (RR) participates in dUMP binding. Cys-161 serves as the catalytic Nucleophile. Residues 181 to 184 (RSND), Asn-192, and 222 to 224 (HVY) contribute to the dUMP site. Residue Asp-184 coordinates (6R)-5,10-methylene-5,6,7,8-tetrahydrofolate. Ala-278 contacts (6R)-5,10-methylene-5,6,7,8-tetrahydrofolate.

It belongs to the thymidylate synthase family. Bacterial-type ThyA subfamily. As to quaternary structure, homodimer.

It is found in the cytoplasm. The catalysed reaction is dUMP + (6R)-5,10-methylene-5,6,7,8-tetrahydrofolate = 7,8-dihydrofolate + dTMP. Its pathway is pyrimidine metabolism; dTTP biosynthesis. In terms of biological role, catalyzes the reductive methylation of 2'-deoxyuridine-5'-monophosphate (dUMP) to 2'-deoxythymidine-5'-monophosphate (dTMP) while utilizing 5,10-methylenetetrahydrofolate (mTHF) as the methyl donor and reductant in the reaction, yielding dihydrofolate (DHF) as a by-product. This enzymatic reaction provides an intracellular de novo source of dTMP, an essential precursor for DNA biosynthesis. The protein is Thymidylate synthase 1 of Bacillus spizizenii (strain ATCC 23059 / NRRL B-14472 / W23) (Bacillus subtilis subsp. spizizenii).